The following is a 498-amino-acid chain: ATP synthase subunit beta, chloroplastic (498 aa).

Residue Gly-172–Thr-179 participates in ATP binding.

It belongs to the ATPase alpha/beta chains family. As to quaternary structure, F-type ATPases have 2 components, CF(1) - the catalytic core - and CF(0) - the membrane proton channel. CF(1) has five subunits: alpha(3), beta(3), gamma(1), delta(1), epsilon(1). CF(0) has four main subunits: a(1), b(1), b'(1) and c(9-12).

It localises to the plastid. Its subcellular location is the chloroplast thylakoid membrane. It carries out the reaction ATP + H2O + 4 H(+)(in) = ADP + phosphate + 5 H(+)(out). Functionally, produces ATP from ADP in the presence of a proton gradient across the membrane. The catalytic sites are hosted primarily by the beta subunits. The sequence is that of ATP synthase subunit beta, chloroplastic from Panax ginseng (Korean ginseng).